The chain runs to 229 residues: Glutathione S-transferase 1 (229 aa).

A GST N-terminal domain is found at 2 to 83 (SPVKVFGHPM…YILRKYGGTA (82 aa)). Residues 41–42 (HK), 54–55 (KM), and 67–68 (ES) each bind glutathione. The GST C-terminal domain maps to 93–223 (GIEELAMVDV…RVCKHMPTEF (131 aa)).

This sequence belongs to the GST superfamily. Phi family.

It catalyses the reaction RX + glutathione = an S-substituted glutathione + a halide anion + H(+). Functionally, conjugation of reduced glutathione to a wide number of exogenous and endogenous hydrophobic electrophiles. The chain is Glutathione S-transferase 1 (GSTA1) from Triticum aestivum (Wheat).